A 290-amino-acid chain; its full sequence is Ribosomal RNA small subunit methyltransferase A (290 aa).

The S-adenosyl-L-methionine site is built by Asn27, Leu29, Gly54, Glu75, Asp100, and Asn125.

It belongs to the class I-like SAM-binding methyltransferase superfamily. rRNA adenine N(6)-methyltransferase family. RsmA subfamily.

The protein localises to the cytoplasm. The enzyme catalyses adenosine(1518)/adenosine(1519) in 16S rRNA + 4 S-adenosyl-L-methionine = N(6)-dimethyladenosine(1518)/N(6)-dimethyladenosine(1519) in 16S rRNA + 4 S-adenosyl-L-homocysteine + 4 H(+). Its function is as follows. Specifically dimethylates two adjacent adenosines (A1518 and A1519) in the loop of a conserved hairpin near the 3'-end of 16S rRNA in the 30S particle. May play a critical role in biogenesis of 30S subunits. This chain is Ribosomal RNA small subunit methyltransferase A, found in Streptococcus gordonii (strain Challis / ATCC 35105 / BCRC 15272 / CH1 / DL1 / V288).